Reading from the N-terminus, the 709-residue chain is Protein IMPAIRED IN BABA-INDUCED STERILITY 1 (709 aa).

Residue G2 is the site of N-myristoyl glycine attachment. Positions 53 to 80 (SGKKSSSKKSGSELGSDFGELSESGRAS) are disordered. The region spanning 131–418 (FEKLEKIGQG…ASTALVSQYF (288 aa)) is the Protein kinase domain. Residues 137-145 (IGQGTYSSV) and K160 contribute to the ATP site. D255 (proton acceptor) is an active-site residue. Disordered regions lie at residues 434-536 (SPSK…PFSG) and 566-609 (SRGH…QDRE). Positions 437–449 (KEIDAKHREDTTR) are enriched in basic and acidic residues. Residues 484-494 (HSQKFQKRNGH) show a composition bias toward basic residues. Residues 495-505 (SVHNSIDSDST) are compositionally biased toward polar residues. 2 stretches are compositionally biased toward basic and acidic residues: residues 509 to 523 (KMQK…EASH) and 586 to 609 (VDSK…QDRE).

The protein belongs to the protein kinase superfamily. Ser/Thr protein kinase family.

In terms of biological role, required for beta-aminobutyric acid (BABA)-induced resistance (BABA-IR) against bacteria (e.g. P.syringae) and oomycetes (e.g. H.parasitica) via priming for salicylate (SA)-dependent defense responses such as pathogenesis-related PR-1 gene expression and trailing necrosis. Involved in BABA-mediated sterility. Necessary for the inheritance of BABA-priming to next generation, especially for the primed to be primed phenotype which consists in an enhanced second BABA-priming in transgenerationally primed plants. This Arabidopsis thaliana (Mouse-ear cress) protein is Protein IMPAIRED IN BABA-INDUCED STERILITY 1.